The sequence spans 853 residues: DNA mismatch repair protein MutS (853 aa).

614–621 is a binding site for ATP; the sequence is GPNMGGKS.

It belongs to the DNA mismatch repair MutS family.

This protein is involved in the repair of mismatches in DNA. It is possible that it carries out the mismatch recognition step. This protein has a weak ATPase activity. This is DNA mismatch repair protein MutS from Escherichia coli O81 (strain ED1a).